The following is a 55-amino-acid chain: UPF0391 membrane protein Tbd_2772 (55 aa).

Helical transmembrane passes span 1–21 (MFGW…FGFA) and 28–48 (AWIA…MLVM).

It belongs to the UPF0391 family.

The protein resides in the cell membrane. The protein is UPF0391 membrane protein Tbd_2772 of Thiobacillus denitrificans (strain ATCC 25259 / T1).